Here is a 389-residue protein sequence, read N- to C-terminus: NADH-quinone oxidoreductase subunit D (389 aa).

The protein belongs to the complex I 49 kDa subunit family. NDH-1 is composed of 14 different subunits. Subunits NuoB, C, D, E, F, and G constitute the peripheral sector of the complex.

It localises to the cell inner membrane. It catalyses the reaction a quinone + NADH + 5 H(+)(in) = a quinol + NAD(+) + 4 H(+)(out). Functionally, NDH-1 shuttles electrons from NADH, via FMN and iron-sulfur (Fe-S) centers, to quinones in the respiratory chain. The immediate electron acceptor for the enzyme in this species is believed to be ubiquinone. Couples the redox reaction to proton translocation (for every two electrons transferred, four hydrogen ions are translocated across the cytoplasmic membrane), and thus conserves the redox energy in a proton gradient. This chain is NADH-quinone oxidoreductase subunit D, found in Rickettsia typhi (strain ATCC VR-144 / Wilmington).